A 309-amino-acid chain; its full sequence is Ribosomal RNA small subunit methyltransferase H (309 aa).

S-adenosyl-L-methionine is bound by residues 34–36 (GGH), aspartate 54, phenylalanine 80, aspartate 102, and glutamine 109.

This sequence belongs to the methyltransferase superfamily. RsmH family.

Its subcellular location is the cytoplasm. It catalyses the reaction cytidine(1402) in 16S rRNA + S-adenosyl-L-methionine = N(4)-methylcytidine(1402) in 16S rRNA + S-adenosyl-L-homocysteine + H(+). Specifically methylates the N4 position of cytidine in position 1402 (C1402) of 16S rRNA. The protein is Ribosomal RNA small subunit methyltransferase H of Cellvibrio japonicus (strain Ueda107) (Pseudomonas fluorescens subsp. cellulosa).